The primary structure comprises 221 residues: Probable septum site-determining protein MinC (221 aa).

This sequence belongs to the MinC family. In terms of assembly, interacts with MinD and FtsZ.

Cell division inhibitor that blocks the formation of polar Z ring septums. Rapidly oscillates between the poles of the cell to destabilize FtsZ filaments that have formed before they mature into polar Z rings. Prevents FtsZ polymerization. This Shewanella woodyi (strain ATCC 51908 / MS32) protein is Probable septum site-determining protein MinC.